A 143-amino-acid polypeptide reads, in one-letter code: Silver-binding protein SilE (143 aa).

The signal sequence occupies residues 1–20; that stretch reads MKNIVLASLLGFGLISSAWA.

This sequence to E.coli PcoE.

The protein resides in the periplasm. Its function is as follows. Component of the sil cation-efflux system that confers resistance to silver. This chain is Silver-binding protein SilE (silE), found in Salmonella typhimurium.